A 185-amino-acid chain; its full sequence is Ribosome-recycling factor (185 aa).

The protein belongs to the RRF family.

The protein localises to the cytoplasm. Its function is as follows. Responsible for the release of ribosomes from messenger RNA at the termination of protein biosynthesis. May increase the efficiency of translation by recycling ribosomes from one round of translation to another. The protein is Ribosome-recycling factor of Actinobacillus pleuropneumoniae serotype 5b (strain L20).